A 1285-amino-acid chain; its full sequence is Replicase polyprotein 1TF (1285 aa).

A C4-type; atypical zinc finger spans residues 8–28 (CMCTPAARVFWNAGQVFCTRC). Residues 69–180 (ECTPSGCCWL…QPFCPFEEAH (112 aa)) enclose the Peptidase C31 domain. The tract at residues 69–182 (ECTPSGCCWL…FCPFEEAHSS (114 aa)) is PCP1-alpha. Residues Cys-76 and His-146 each act as for Nsp1-alpha papain-like cysteine proteinase activity in the active site. Residues 269–384 (PDVFDGKCWL…IFRFGAHKWY (116 aa)) form a PCP1-beta region. Residues 269–385 (PDVFDGKCWL…FRFGAHKWYG (117 aa)) enclose the Peptidase C32 domain. Catalysis depends on for Nsp1-beta papain-like cysteine proteinase activity residues Cys-276 and His-345. Disordered stretches follow at residues 752–797 (PSDP…DAGA) and 1050–1088 (KPVG…SRVS). Over residues 775–790 (APASTTTLVREQTPDN) the composition is skewed to polar residues. Helical transmembrane passes span 1136-1156 (LWLQ…CSVV), 1170-1190 (FLVL…LLLY), 1211-1231 (VMLS…AALW), and 1250-1270 (VISG…FLLF).

Its subcellular location is the host nucleus. It localises to the host cytoplasm. It is found in the host membrane. In terms of biological role, inhibits host IFN-beta production. Plays a role in the degradation of the host transcriptional activator CREBBP protein. The degradation of host CREBBP which is a key component of the IFN enhanceosome is likely responsible for the inhibition of interferon mediated by Nsp1-alpha. Also participates in the inhibition of host NF-kappa-B activation. Functionally, plays a role in the inhibition of the interferon-activated JAK/STAT signal transduction by mediating the ubiquitination and subsequent proteasomal degradation of host KPNA1. Plays a role in viral replication. This chain is Replicase polyprotein 1TF, found in Porcine reproductive and respiratory syndrome virus (strain Lelystad) (PRRSV).